The chain runs to 962 residues: Glycine dehydrogenase (decarboxylating) (962 aa).

N6-(pyridoxal phosphate)lysine is present on Lys-709.

This sequence belongs to the GcvP family. In terms of assembly, the glycine cleavage system is composed of four proteins: P, T, L and H. Requires pyridoxal 5'-phosphate as cofactor.

It carries out the reaction N(6)-[(R)-lipoyl]-L-lysyl-[glycine-cleavage complex H protein] + glycine + H(+) = N(6)-[(R)-S(8)-aminomethyldihydrolipoyl]-L-lysyl-[glycine-cleavage complex H protein] + CO2. The glycine cleavage system catalyzes the degradation of glycine. The P protein binds the alpha-amino group of glycine through its pyridoxal phosphate cofactor; CO(2) is released and the remaining methylamine moiety is then transferred to the lipoamide cofactor of the H protein. The polypeptide is Glycine dehydrogenase (decarboxylating) (Shewanella sediminis (strain HAW-EB3)).